We begin with the raw amino-acid sequence, 63 residues long: Prokaryotic ubiquitin-like protein Pup (63 aa).

The tract at residues methionine 1 to threonine 35 is disordered. The tract at residues aspartate 19–tyrosine 57 is ARC ATPase binding. An Isoglutamyl lysine isopeptide (Glu-Lys) (interchain with K-? in acceptor proteins) cross-link involves residue glutamate 63.

Belongs to the prokaryotic ubiquitin-like protein family. As to quaternary structure, strongly interacts with the proteasome-associated ATPase ARC through a hydrophobic interface; the interacting region of Pup lies in its C-terminal half. There is one Pup binding site per ARC hexamer ring.

Its pathway is protein degradation; proteasomal Pup-dependent pathway. Its function is as follows. Protein modifier that is covalently attached to lysine residues of substrate proteins, thereby targeting them for proteasomal degradation. The tagging system is termed pupylation. The protein is Prokaryotic ubiquitin-like protein Pup of Corynebacterium aurimucosum (strain ATCC 700975 / DSM 44827 / CIP 107346 / CN-1) (Corynebacterium nigricans).